The sequence spans 458 residues: Ribosomal protein uS12 methylthiotransferase RimO (458 aa).

An MTTase N-terminal domain is found at 26 to 136 (PRIGMVSLGC…VLDAVHGAVP (111 aa)). [4Fe-4S] cluster-binding residues include cysteine 35, cysteine 71, cysteine 100, cysteine 167, cysteine 171, and cysteine 174. Residues 153–389 (LTPRHYAYLK…MEKAQAISEA (237 aa)) enclose the Radical SAM core domain. In terms of domain architecture, TRAM spans 392–458 (QAKVGRTMQV…SEYDLWGKLT (67 aa)).

The protein belongs to the methylthiotransferase family. RimO subfamily. [4Fe-4S] cluster serves as cofactor.

The protein localises to the cytoplasm. The catalysed reaction is L-aspartate(89)-[ribosomal protein uS12]-hydrogen + (sulfur carrier)-SH + AH2 + 2 S-adenosyl-L-methionine = 3-methylsulfanyl-L-aspartate(89)-[ribosomal protein uS12]-hydrogen + (sulfur carrier)-H + 5'-deoxyadenosine + L-methionine + A + S-adenosyl-L-homocysteine + 2 H(+). In terms of biological role, catalyzes the methylthiolation of an aspartic acid residue of ribosomal protein uS12. This chain is Ribosomal protein uS12 methylthiotransferase RimO, found in Jannaschia sp. (strain CCS1).